We begin with the raw amino-acid sequence, 1277 residues long: Clustered mitochondria protein 1 (1277 aa).

Disordered regions lie at residues 19-39 (LPKEDNHSHNTKHLKKTQSSK) and 148-176 (LPLGPIKERSKQEEKDEKSDPEEKKNTFK). Positions 27–36 (HNTKHLKKTQ) are enriched in basic residues. A compositionally biased stretch (basic and acidic residues) spans 153–176 (IKERSKQEEKDEKSDPEEKKNTFK). Residues 339-596 (PPNNPDYLRL…NTYPLDINFA (258 aa)) form the Clu domain. TPR repeat units lie at residues 704-738 (GINMRYLGKIIELSQKELDSQIVHYEQNLKAVEQD), 1020-1053 (AEKYLSLSAIYNKLALYPEAIAFCRKACTIYERV), and 1148-1181 (GYTESRLGNLFAALKDFHRALEHITVTQGIFTKQ). Residues 1212 to 1277 (LAQDQMSTTG…TNNKKKHGKK (66 aa)) are disordered. The segment covering 1235 to 1249 (KKDDVKPELANKSVD) has biased composition (basic and acidic residues). Serine 1247 is modified (phosphoserine). The segment covering 1264 to 1277 (SKNKTNNKKKHGKK) has biased composition (basic residues).

Belongs to the CLU family. In terms of assembly, may associate with the eukaryotic translation initiation factor 3 (eIF-3) complex. Associates with the 80S ribosome.

The protein localises to the cytoplasm. MRNA-binding protein involved in proper cytoplasmic distribution of mitochondria. This Saccharomyces cerevisiae (strain ATCC 204508 / S288c) (Baker's yeast) protein is Clustered mitochondria protein 1.